Here is a 433-residue protein sequence, read N- to C-terminus: MRTKSLKKNKINVITLGCSKNVYDSEVLMGQLKASGKNVVHEEEGNIVVINTCGFIDNAKAESVNTILEYADKKERGLVDKVFVTGCLSERYRPDLEKEIPNVDQYFGTTELPALLKALGADYRHELLGERLTTTPKNYAYLKISEGCDRPCSFCAIPLMRGKNVSQTIEKLVKEAEGLAKNGVKELILIAQDLTYYGLDLYKKRALGELLEALVKIEGIEWIRLHYAFPTGFPMDVLEIMKREPKICNYIDIPLQHISDSILKSMKRGTTREKTTKLLKDFRAAVPGMAIRTTLIVGYPGETEEDFEILKEFVQEMKFDRMGCFAYSHEENTGAYELVDDVPDEVKQARSLEIMDLQSQISWDLNQEKLGQTFRCIIDRKEGGHFVGRTEFDSPDVDNEVLIDATKHYVKTGEFVNIKIIEATEFDLYGEPA.

The region spanning 9 to 124 (NKINVITLGC…LLKALGADYR (116 aa)) is the MTTase N-terminal domain. 6 residues coordinate [4Fe-4S] cluster: Cys-18, Cys-53, Cys-87, Cys-148, Cys-152, and Cys-155. Residues 134 to 364 (TTPKNYAYLK…MDLQSQISWD (231 aa)) form the Radical SAM core domain. The TRAM domain occupies 367-433 (QEKLGQTFRC…TEFDLYGEPA (67 aa)).

This sequence belongs to the methylthiotransferase family. RimO subfamily. [4Fe-4S] cluster is required as a cofactor.

Its subcellular location is the cytoplasm. It carries out the reaction L-aspartate(89)-[ribosomal protein uS12]-hydrogen + (sulfur carrier)-SH + AH2 + 2 S-adenosyl-L-methionine = 3-methylsulfanyl-L-aspartate(89)-[ribosomal protein uS12]-hydrogen + (sulfur carrier)-H + 5'-deoxyadenosine + L-methionine + A + S-adenosyl-L-homocysteine + 2 H(+). Catalyzes the methylthiolation of an aspartic acid residue of ribosomal protein uS12. The chain is Ribosomal protein uS12 methylthiotransferase RimO from Flavobacterium psychrophilum (strain ATCC 49511 / DSM 21280 / CIP 103535 / JIP02/86).